The chain runs to 451 residues: MKKLISFDYSKALPFIHPHEIEYMEKHAKLSLEMVLKANAQGNGFLGWVNLPRDYDRAEFERIKKAAHKIQSDSDVLVVIGIGGSYLGARAAIEMLSHSFYNLLPKGKRNTPEIYFAGNSISSTYLKDLLELIADKEVSINVISKSGTTTEPAIAFRVFRDFMEKKYGKDKARSRIYVTTDREKGALKKLADSEGYETFVIPDDVGGRYSVLTAVGLLPIAVAGINIDEMMEGAYEASTVYTKEDLSENISMQYAILRNILYRKGKAIEILVNYEPRLHYFAEWWKQLFGESEGKDQKGIYPASVDFTTDLHSMGQFIQEGSRNIFETVLNVEKPAKDIIINEDRDNIDGLNFLAGKTIDFVNKKAFEGTLLAHTDGGVPNLVVNIPEITPFYFGNLVYFFEMACAISGYINGVNPFDQPGVEAYKKNMFALLGRPGFEKEREELERRLRG.

Catalysis depends on Glu-291, which acts as the Proton donor. Residues His-312 and Lys-426 contribute to the active site.

Belongs to the GPI family.

The protein resides in the cytoplasm. It catalyses the reaction alpha-D-glucose 6-phosphate = beta-D-fructose 6-phosphate. The protein operates within carbohydrate biosynthesis; gluconeogenesis. Its pathway is carbohydrate degradation; glycolysis; D-glyceraldehyde 3-phosphate and glycerone phosphate from D-glucose: step 2/4. In terms of biological role, catalyzes the reversible isomerization of glucose-6-phosphate to fructose-6-phosphate. In Caldanaerobacter subterraneus subsp. tengcongensis (strain DSM 15242 / JCM 11007 / NBRC 100824 / MB4) (Thermoanaerobacter tengcongensis), this protein is Glucose-6-phosphate isomerase.